A 443-amino-acid polypeptide reads, in one-letter code: 5-methylthioadenosine/S-adenosylhomocysteine deaminase 1 (443 aa).

Residues histidine 69 and histidine 71 each contribute to the Zn(2+) site. Residues glutamate 98 and histidine 191 each contribute to the substrate site. Histidine 218 is a binding site for Zn(2+). The substrate site is built by glutamate 221 and aspartate 306. Residue aspartate 306 coordinates Zn(2+).

Belongs to the metallo-dependent hydrolases superfamily. MTA/SAH deaminase family. Zn(2+) serves as cofactor.

The enzyme catalyses S-adenosyl-L-homocysteine + H2O + H(+) = S-inosyl-L-homocysteine + NH4(+). The catalysed reaction is S-methyl-5'-thioadenosine + H2O + H(+) = S-methyl-5'-thioinosine + NH4(+). Functionally, catalyzes the deamination of 5-methylthioadenosine and S-adenosyl-L-homocysteine into 5-methylthioinosine and S-inosyl-L-homocysteine, respectively. Is also able to deaminate adenosine. The protein is 5-methylthioadenosine/S-adenosylhomocysteine deaminase 1 of Syntrophus aciditrophicus (strain SB).